The primary structure comprises 616 residues: GPI mannosyltransferase 3 (616 aa).

At 1-16 the chain is on the cytoplasmic side; sequence MAHEVHRIKPKLGRTQ. The chain crosses the membrane as a helical span at residues 17-37; that stretch reads IFWVFLAFRVLNAVLTRTFFQ. Residues 38–86 lie on the Lumenal side of the membrane; it reads ADEFWQALEPAHWKAFKYGELTWEWKFGVRSYLFPMIFELTYRLVSLSS. A helical membrane pass occupies residues 87–107; sequence ILLHYALLLLSTIGSDLLILL. At 108-136 the chain is on the cytoplasmic side; the sequence is LPKYELSWQVAEDLKRLPFDVTRSFEYYG. A helical transmembrane segment spans residues 137–157; the sequence is VIYAPKIVMAVLASIGEYYIV. Residues 158–188 lie on the Lumenal side of the membrane; the sequence is RFVQKLYLLTLDKRNEKEEEERRSGLSEITK. A helical transmembrane segment spans residues 189–209; it reads FALLLSLTNFFNCFFITRTFI. Residues 210-240 lie on the Cytoplasmic side of the membrane; the sequence is NSFEMILTSIALYYWDWTGGQMIKESSFTKS. The chain crosses the membrane as a helical span at residues 241-261; sequence LIFAFLACLQRPSSGLIWVIP. Residues 262 to 278 lie on the Lumenal side of the membrane; it reads SISLILNLVGKKQYHLL. A helical transmembrane segment spans residues 279–299; sequence FITFSKVLRSFFLVFTANAII. Over 300–338 the chain is Cytoplasmic; it reads DMYFYEKVTFPFFRFLKFNFTTPLSKFYGVAPWHFHFFQ. The helical transmembrane segment at 339–359 threads the bilayer; it reads SLPIVLGASIPAFAFGLFFPL. The Lumenal segment spans residues 360–392; sequence SKRSFPKKYLNPFFQVKLTILLNLLVYSTLPHK. A helical membrane pass occupies residues 393–413; that stretch reads EFRFIFPLQPLFILISSFGLL. The Cytoplasmic portion of the chain corresponds to 414-423; it reads RLDRDYWKRL. Residues 424 to 444 traverse the membrane as a helical segment; sequence SGLKSLLWLVPFVSVFIALLL. Residues 445-616 are Lumenal-facing; the sequence is DTFHESGSIE…DYSDIPAADI (172 aa).

This sequence belongs to the glycosyltransferase 22 family. PIGB subfamily.

Its subcellular location is the endoplasmic reticulum membrane. It functions in the pathway glycolipid biosynthesis; glycosylphosphatidylinositol-anchor biosynthesis. Mannosyltransferase involved in glycosylphosphatidylinositol-anchor biosynthesis. Transfers the third mannose to Man2-GlcN-acyl-PI during GPI precursor assembly. The protein is GPI mannosyltransferase 3 (GPI10) of Saccharomyces cerevisiae (strain ATCC 204508 / S288c) (Baker's yeast).